We begin with the raw amino-acid sequence, 487 residues long: NADH-quinone oxidoreductase subunit N (487 aa).

Helical transmembrane passes span 8-28 (LLALLPLLLTTGAMVALMLAI), 37-57 (AFVVTIAGLNLALFSLPIVMA), 71-91 (GYAVFYMGLVLIGALATCTFG), 104-124 (EFYLLLLIATAGGLVLAGSRH), 125-145 (LASLFIGIEMLTLPMFGLVGY), 159-179 (YMVLSAAATAFLLFGMALLYA), 203-223 (LMGGLGLMLVGFAFKLSLAPF), 235-255 (PAPVATFLATVSKIAVFCVLL), 269-289 (IHWLLAAMAVISIVIGNLLAL), 303-323 (ISHFGYLLAVIVASRLGQMPV), 327-347 (GVYLLMYLFTSLGAFGVISMM), 374-394 (AVLTVMMLSLAGIPMTLGFIG), 408-427 (WWLSGAIVLGSALGLYYYLR), and 449-469 (AITSGGLVVLLSAALVVALGL).

It belongs to the complex I subunit 2 family. NDH-1 is composed of 14 different subunits. Subunits NuoA, H, J, K, L, M, N constitute the membrane sector of the complex.

The protein resides in the cell inner membrane. It carries out the reaction a quinone + NADH + 5 H(+)(in) = a quinol + NAD(+) + 4 H(+)(out). Its function is as follows. NDH-1 shuttles electrons from NADH, via FMN and iron-sulfur (Fe-S) centers, to quinones in the respiratory chain. The immediate electron acceptor for the enzyme in this species is believed to be ubiquinone. Couples the redox reaction to proton translocation (for every two electrons transferred, four hydrogen ions are translocated across the cytoplasmic membrane), and thus conserves the redox energy in a proton gradient. In Aeromonas hydrophila subsp. hydrophila (strain ATCC 7966 / DSM 30187 / BCRC 13018 / CCUG 14551 / JCM 1027 / KCTC 2358 / NCIMB 9240 / NCTC 8049), this protein is NADH-quinone oxidoreductase subunit N.